Here is a 180-residue protein sequence, read N- to C-terminus: Dephospho-CoA kinase (180 aa).

A DPCK domain is found at 2–180 (VIGVTGKIGT…VMKLVWEKRE (179 aa)). Residue 10–15 (GTGKST) participates in ATP binding.

The protein belongs to the CoaE family.

Its subcellular location is the cytoplasm. It catalyses the reaction 3'-dephospho-CoA + ATP = ADP + CoA + H(+). It participates in cofactor biosynthesis; coenzyme A biosynthesis; CoA from (R)-pantothenate: step 5/5. Catalyzes the phosphorylation of the 3'-hydroxyl group of dephosphocoenzyme A to form coenzyme A. In Thermotoga maritima (strain ATCC 43589 / DSM 3109 / JCM 10099 / NBRC 100826 / MSB8), this protein is Dephospho-CoA kinase.